Consider the following 302-residue polypeptide: Sulfate adenylyltransferase subunit 2 (302 aa).

Belongs to the PAPS reductase family. CysD subfamily. In terms of assembly, heterodimer composed of CysD, the smaller subunit, and CysN.

It catalyses the reaction sulfate + ATP + H(+) = adenosine 5'-phosphosulfate + diphosphate. The protein operates within sulfur metabolism; hydrogen sulfide biosynthesis; sulfite from sulfate: step 1/3. With CysN forms the ATP sulfurylase (ATPS) that catalyzes the adenylation of sulfate producing adenosine 5'-phosphosulfate (APS) and diphosphate, the first enzymatic step in sulfur assimilation pathway. APS synthesis involves the formation of a high-energy phosphoric-sulfuric acid anhydride bond driven by GTP hydrolysis by CysN coupled to ATP hydrolysis by CysD. The sequence is that of Sulfate adenylyltransferase subunit 2 from Proteus mirabilis (strain HI4320).